Here is a 433-residue protein sequence, read N- to C-terminus: Pyrimidine-nucleoside phosphorylase (433 aa).

Residue 81-83 participates in phosphate binding; the sequence is KHS. K(+) is bound by residues Gly88 and Thr90. Residues Thr92, 108-110, and Thr120 each bind phosphate; that span reads KMS. Substrate contacts are provided by Arg168 and Lys187. 3 residues coordinate K(+): Leu243, Ala246, and Glu255.

The protein belongs to the thymidine/pyrimidine-nucleoside phosphorylase family. Homodimer. It depends on K(+) as a cofactor.

The enzyme catalyses uridine + phosphate = alpha-D-ribose 1-phosphate + uracil. It catalyses the reaction thymidine + phosphate = 2-deoxy-alpha-D-ribose 1-phosphate + thymine. It carries out the reaction 2'-deoxyuridine + phosphate = 2-deoxy-alpha-D-ribose 1-phosphate + uracil. Its function is as follows. Catalyzes phosphorolysis of the pyrimidine nucleosides uridine, thymidine and 2'-deoxyuridine with the formation of the corresponding pyrimidine base and ribose-1-phosphate. This chain is Pyrimidine-nucleoside phosphorylase (pdp), found in Geobacillus stearothermophilus (Bacillus stearothermophilus).